The following is a 249-amino-acid chain: Small ribosomal subunit protein uS3y (249 aa).

Residues 21 to 92 form the KH type-2 domain; the sequence is LNEVLTRELA…SVELYAEKVN (72 aa). A Phosphoserine modification is found at serine 212.

Belongs to the universal ribosomal protein uS3 family.

In Arabidopsis thaliana (Mouse-ear cress), this protein is Small ribosomal subunit protein uS3y (RPS3B).